The sequence spans 510 residues: Bifunctional purine biosynthesis protein PurH (510 aa).

The MGS-like domain occupies methionine 1–valine 144.

Belongs to the PurH family.

The enzyme catalyses (6R)-10-formyltetrahydrofolate + 5-amino-1-(5-phospho-beta-D-ribosyl)imidazole-4-carboxamide = 5-formamido-1-(5-phospho-D-ribosyl)imidazole-4-carboxamide + (6S)-5,6,7,8-tetrahydrofolate. It catalyses the reaction IMP + H2O = 5-formamido-1-(5-phospho-D-ribosyl)imidazole-4-carboxamide. Its pathway is purine metabolism; IMP biosynthesis via de novo pathway; 5-formamido-1-(5-phospho-D-ribosyl)imidazole-4-carboxamide from 5-amino-1-(5-phospho-D-ribosyl)imidazole-4-carboxamide (10-formyl THF route): step 1/1. It functions in the pathway purine metabolism; IMP biosynthesis via de novo pathway; IMP from 5-formamido-1-(5-phospho-D-ribosyl)imidazole-4-carboxamide: step 1/1. This Clostridioides difficile (strain 630) (Peptoclostridium difficile) protein is Bifunctional purine biosynthesis protein PurH.